The following is a 357-amino-acid chain: 4-hydroxy-3-methylbut-2-en-1-yl diphosphate synthase (flavodoxin) (357 aa).

The [4Fe-4S] cluster site is built by C264, C267, C299, and E306.

It belongs to the IspG family. [4Fe-4S] cluster is required as a cofactor.

The enzyme catalyses (2E)-4-hydroxy-3-methylbut-2-enyl diphosphate + oxidized [flavodoxin] + H2O + 2 H(+) = 2-C-methyl-D-erythritol 2,4-cyclic diphosphate + reduced [flavodoxin]. Its pathway is isoprenoid biosynthesis; isopentenyl diphosphate biosynthesis via DXP pathway; isopentenyl diphosphate from 1-deoxy-D-xylulose 5-phosphate: step 5/6. In terms of biological role, converts 2C-methyl-D-erythritol 2,4-cyclodiphosphate (ME-2,4cPP) into 1-hydroxy-2-methyl-2-(E)-butenyl 4-diphosphate. The protein is 4-hydroxy-3-methylbut-2-en-1-yl diphosphate synthase (flavodoxin) of Campylobacter jejuni (strain RM1221).